Consider the following 521-residue polypeptide: Probable feruloyl esterase B-2 (521 aa).

The signal sequence occupies residues 1–19 (MKVSLWLTLLGVNLSLALA). Residues Asn-13, Asn-53, Asn-85, Asn-98, and Asn-138 are each glycosylated (N-linked (GlcNAc...) asparagine). 2 cysteine pairs are disulfide-bonded: Cys-28-Cys-75 and Cys-63-Cys-114. 4 disulfides stabilise this stretch: Cys-187–Cys-440, Cys-257–Cys-274, Cys-283–Cys-291, and Cys-506–Cys-520. Ser-188 acts as the Acyl-ester intermediate in catalysis. Residue Asn-235 is glycosylated (N-linked (GlcNAc...) asparagine). Ca(2+)-binding residues include Asp-258, Asp-261, Val-263, Asp-265, and Ile-267. Asp-399 serves as the catalytic Charge relay system. Residue Asn-419 is glycosylated (N-linked (GlcNAc...) asparagine). Catalysis depends on His-439, which acts as the Charge relay system.

The protein belongs to the tannase family.

It is found in the secreted. It carries out the reaction feruloyl-polysaccharide + H2O = ferulate + polysaccharide.. In terms of biological role, involved in degradation of plant cell walls. Hydrolyzes the feruloyl-arabinose ester bond in arabinoxylans as well as the feruloyl-galactose and feruloyl-arabinose ester bonds in pectin. The polypeptide is Probable feruloyl esterase B-2 (faeB-2) (Aspergillus flavus (strain ATCC 200026 / FGSC A1120 / IAM 13836 / NRRL 3357 / JCM 12722 / SRRC 167)).